We begin with the raw amino-acid sequence, 374 residues long: Erythronate-4-phosphate dehydrogenase (374 aa).

The substrate site is built by serine 53 and threonine 75. Aspartate 160 provides a ligand contact to NAD(+). Arginine 222 is an active-site residue. NAD(+) is bound at residue aspartate 246. The active site involves glutamate 251. Histidine 268 (proton donor) is an active-site residue. Residue glycine 271 coordinates NAD(+). Tyrosine 272 serves as a coordination point for substrate.

The protein belongs to the D-isomer specific 2-hydroxyacid dehydrogenase family. PdxB subfamily. Homodimer.

The protein localises to the cytoplasm. It catalyses the reaction 4-phospho-D-erythronate + NAD(+) = (R)-3-hydroxy-2-oxo-4-phosphooxybutanoate + NADH + H(+). It participates in cofactor biosynthesis; pyridoxine 5'-phosphate biosynthesis; pyridoxine 5'-phosphate from D-erythrose 4-phosphate: step 2/5. Its function is as follows. Catalyzes the oxidation of erythronate-4-phosphate to 3-hydroxy-2-oxo-4-phosphonooxybutanoate. This is Erythronate-4-phosphate dehydrogenase from Psychrobacter sp. (strain PRwf-1).